The primary structure comprises 457 residues: Paired box protein Pax-8 (457 aa).

Residues 9–135 (GHGGLNQLGG…SSINRIIRTK (127 aa)) constitute a DNA-binding region (paired). Positions 12–68 (GLNQLGGAFVNGRPLPEVVRQRIVDLAHQGVRPCDISRQLRVSHGCVSKILGRYYET) are PAI subdomain. Residues 87–135 (KVVEKIGDYKRQNPTMFAWEIRDRLLAEGVCDNDTVPSVSSINRIIRTK) are RED subdomain. The span at 159–182 (LIPSSAVTPPESPQSDSLGSTYSI) shows a compositional bias: polar residues. The tract at residues 159–226 (LIPSSAVTPP…SSGPRKHLRT (68 aa)) is disordered. At S304 the chain carries Phosphoserine.

As to quaternary structure, interacts with WWTR1.

It is found in the nucleus. Its function is as follows. Thought to encode a transcription factor. It may have a role in kidney cell differentiation. May play a regulatory role in mammalian development. The protein is Paired box protein Pax-8 (Pax8) of Rattus norvegicus (Rat).